The following is a 202-amino-acid chain: Transmembrane 4 L6 family member 1 (202 aa).

The Cytoplasmic segment spans residues 1 to 9 (MCSSKCTRY). Residues 10–30 (IGHSLVVFAVLCIVANILLYF) traverse the membrane as a helical segment. Topologically, residues 31 to 49 (PNGETKYAYEDHLSRFVWF) are extracellular. A helical transmembrane segment spans residues 50-70 (FAGIVGGGLLILLPAFVFLGL). The Cytoplasmic portion of the chain corresponds to 71-93 (EGEDCCGCWSCENYGKRCTMLSS). The chain crosses the membrane as a helical span at residues 94–114 (IMAALIGIAGSGYCVIVAALG). At 115–161 (LAEGPKCGDSHGMWNYTFANTDGQYLLDPTTWSKCHEPNNIVEWNVT) the chain is on the extracellular side. Residues Asn-129 and Asn-159 are each glycosylated (N-linked (GlcNAc...) asparagine). The chain crosses the membrane as a helical span at residues 162-182 (LFSILLALGGLEFILCLIQVI). At 183–202 (NGVLEGMCSYCCSHQQQYDC) the chain is on the cytoplasmic side.

It belongs to the L6 tetraspanin family. Present in high molecular weight complexes in tumor cells. Interacts with SDCBP2.

The protein localises to the membrane. This chain is Transmembrane 4 L6 family member 1 (TM4SF1), found in Mesocricetus auratus (Golden hamster).